A 342-amino-acid chain; its full sequence is Holliday junction branch migration complex subunit RuvB (342 aa).

The large ATPase domain (RuvB-L) stretch occupies residues 1–179 (MTNILSPEKS…FGIPMRLNFY (179 aa)). Residues I18, R19, G60, K63, T64, T65, 126–128 (EDF), R169, Y179, and R216 each bind ATP. T64 serves as a coordination point for Mg(2+). The segment at 180–250 (NTEELKQVLN…ICDFGLKRLT (71 aa)) is small ATPAse domain (RuvB-S). Residues 253-342 (SIGLDSNDYR…NQLNILNENE (90 aa)) form a head domain (RuvB-H) region. R289, R308, and R313 together coordinate DNA.

It belongs to the RuvB family. As to quaternary structure, homohexamer. Forms an RuvA(8)-RuvB(12)-Holliday junction (HJ) complex. HJ DNA is sandwiched between 2 RuvA tetramers; dsDNA enters through RuvA and exits via RuvB. An RuvB hexamer assembles on each DNA strand where it exits the tetramer. Each RuvB hexamer is contacted by two RuvA subunits (via domain III) on 2 adjacent RuvB subunits; this complex drives branch migration. In the full resolvosome a probable DNA-RuvA(4)-RuvB(12)-RuvC(2) complex forms which resolves the HJ.

It is found in the cytoplasm. It carries out the reaction ATP + H2O = ADP + phosphate + H(+). In terms of biological role, participates in UV-tolerance of Synechocystis PCC 6803. Its function is as follows. The RuvA-RuvB-RuvC complex processes Holliday junction (HJ) DNA during genetic recombination and DNA repair, while the RuvA-RuvB complex plays an important role in the rescue of blocked DNA replication forks via replication fork reversal (RFR). RuvA specifically binds to HJ cruciform DNA, conferring on it an open structure. The RuvB hexamer acts as an ATP-dependent pump, pulling dsDNA into and through the RuvAB complex. RuvB forms 2 homohexamers on either side of HJ DNA bound by 1 or 2 RuvA tetramers; 4 subunits per hexamer contact DNA at a time. Coordinated motions by a converter formed by DNA-disengaged RuvB subunits stimulates ATP hydrolysis and nucleotide exchange. Immobilization of the converter enables RuvB to convert the ATP-contained energy into a lever motion, pulling 2 nucleotides of DNA out of the RuvA tetramer per ATP hydrolyzed, thus driving DNA branch migration. The RuvB motors rotate together with the DNA substrate, which together with the progressing nucleotide cycle form the mechanistic basis for DNA recombination by continuous HJ branch migration. Branch migration allows RuvC to scan DNA until it finds its consensus sequence, where it cleaves and resolves cruciform DNA. The chain is Holliday junction branch migration complex subunit RuvB from Rickettsia prowazekii (strain Madrid E).